Here is a 394-residue protein sequence, read N- to C-terminus: Elongation factor Tu (394 aa).

Residues 10–204 form the tr-type G domain; sequence KPHVNVGTIG…YLDSYIPEPE (195 aa). Residues 19–26 form a G1 region; that stretch reads GHVDHGKT. 19–26 provides a ligand contact to GTP; sequence GHVDHGKT. Threonine 26 is a binding site for Mg(2+). The G2 stretch occupies residues 60–64; sequence GITIN. The interval 81–84 is G3; sequence DCPG. Residues 81-85 and 136-139 contribute to the GTP site; these read DCPGH and NKCD. Residues 136–139 form a G4 region; sequence NKCD. The interval 174-176 is G5; that stretch reads SAL.

It belongs to the TRAFAC class translation factor GTPase superfamily. Classic translation factor GTPase family. EF-Tu/EF-1A subfamily. In terms of assembly, monomer.

The protein resides in the cytoplasm. The enzyme catalyses GTP + H2O = GDP + phosphate + H(+). Functionally, GTP hydrolase that promotes the GTP-dependent binding of aminoacyl-tRNA to the A-site of ribosomes during protein biosynthesis. This chain is Elongation factor Tu, found in Enterobacter sp. (strain 638).